Here is a 416-residue protein sequence, read N- to C-terminus: Ferrochelatase, mitochondrial (416 aa).

The N-terminal 47 residues, 1-47 (MAAALRSAGVLLRDRLLYGGSRACQPRRCQSGAATAAAATETAQRAR), are a transit peptide targeting the mitochondrion. A disordered region spans residues 41 to 62 (ETAQRARSPKPQAQPGNRKPRT). An N6-acetyllysine modification is found at K50. R108, Y116, and S123 together coordinate protoporphyrin IX. An N6-succinyllysine modification is found at K131. A [2Fe-2S] cluster-binding site is contributed by C189. H223 is a catalytic residue. K283 carries the N6-acetyllysine; alternate modification. At K283 the chain carries N6-succinyllysine; alternate. The active site involves D376. Residues C396, C399, and C404 each contribute to the [2Fe-2S] cluster site. Position 408 is an N6-acetyllysine; alternate (K408). K408 carries the post-translational modification N6-succinyllysine; alternate.

The protein belongs to the ferrochelatase family. As to quaternary structure, homodimer. Homotetramer. Interaction with PGRMC1; the interaction results in decreased FECH activity. Interacts with ABCB10 and SLC25A37; this interaction forms an oligomeric complex. Forms a complex with ABCB7 and ABCB10, where a dimeric FECH bridges ABCB7 and ABCB10 homodimers; this complex may be required for cellular iron homeostasis, mitochondrial function and heme biosynthesis. Interacts with ABCB7 and ABCB10. The cofactor is [2Fe-2S] cluster.

Its subcellular location is the mitochondrion inner membrane. It carries out the reaction heme b + 2 H(+) = protoporphyrin IX + Fe(2+). It functions in the pathway porphyrin-containing compound metabolism; protoheme biosynthesis; protoheme from protoporphyrin-IX: step 1/1. Catalyzes the ferrous insertion into protoporphyrin IX and participates in the terminal step in the heme biosynthetic pathway. The polypeptide is Ferrochelatase, mitochondrial (Bos taurus (Bovine)).